A 223-amino-acid chain; its full sequence is MGPWEAKWIRHSDVRPFPQPEPMTVEEKVAVMLKPELHVSSGCHPYPAVNDLGETNGGLKTTGAPSGMCKGSGWGSQVYGRHASFRGVWAIMYVWYFPKDMPSAHFGHRHDWEHVIVWIEKPVVENVKILAVTPSFHDGYSKQVPPDPSHLNGLAAKFIYESEWPINHALRPTRKGGKKQDLILWEQMSSNARHALNIVPWGAANTPFNDFVFMGRLEKAFPF.

Residues 90 to 100 carry the Conserved undecapeptide motif motif; sequence AIMYVWYFPKD. The short motif at 107 to 113 is the Conserved heptapeptide motif element; that stretch reads GHRHDWE.

This sequence belongs to the Necrosis inducing protein (NPP1) family.

Its subcellular location is the secreted. It is found in the host cytoplasm. In terms of biological role, probable secreted effector that may act as a pathogen-associated molecular pattern (PAMP) recognized by the plant immune system. Seems not to induce necrosis, neither in several susceptible or resistant Vitis species nor in the dicot model plant Nicotiana benthamiana. This chain is NLP effector protein 3, found in Plasmopara viticola (Downy mildew of grapevine).